The sequence spans 102 residues: Small ribosomal subunit protein uS10 (102 aa).

It belongs to the universal ribosomal protein uS10 family. As to quaternary structure, part of the 30S ribosomal subunit.

In terms of biological role, involved in the binding of tRNA to the ribosomes. The sequence is that of Small ribosomal subunit protein uS10 from Nocardioides sp. (strain ATCC BAA-499 / JS614).